The chain runs to 228 residues: ATP synthase subunit a (228 aa).

Transmembrane regions (helical) follow at residues 16-36 (GQEWIILSHYVLVIGIIFIIA), 45-65 (LVPTGSQNVLEAFVGGIISMG), 80-100 (LIGSLALVIFVSNMIGVIPGF), 106-126 (NINFTLSLALIVFVYYNYLGI), 138-158 (FMGPMPVLAPLMFPIEIISHL), 178-198 (FLMVLLMLVPWILPLPGFFLL), and 201-221 (FGVLQAFIFSILTYVYIAGSI).

Belongs to the ATPase A chain family. As to quaternary structure, F-type ATPases have 2 components, CF(1) - the catalytic core - and CF(0) - the membrane proton channel. CF(1) has five subunits: alpha(3), beta(3), gamma(1), delta(1), epsilon(1). CF(0) has three main subunits: a(1), b(2) and c(9-12). The alpha and beta chains form an alternating ring which encloses part of the gamma chain. CF(1) is attached to CF(0) by a central stalk formed by the gamma and epsilon chains, while a peripheral stalk is formed by the delta and b chains.

Its subcellular location is the cell inner membrane. In terms of biological role, key component of the proton channel; it plays a direct role in the translocation of protons across the membrane. The sequence is that of ATP synthase subunit a from Aliarcobacter butzleri (strain RM4018) (Arcobacter butzleri).